Here is a 192-residue protein sequence, read N- to C-terminus: Potassium-transporting ATPase KdpC subunit (192 aa).

The helical transmembrane segment at 14–34 (LTGVLVVLCGLIYPAMVTGIA) threads the bilayer.

It belongs to the KdpC family. The system is composed of three essential subunits: KdpA, KdpB and KdpC.

Its subcellular location is the cell membrane. Functionally, part of the high-affinity ATP-driven potassium transport (or Kdp) system, which catalyzes the hydrolysis of ATP coupled with the electrogenic transport of potassium into the cytoplasm. This subunit acts as a catalytic chaperone that increases the ATP-binding affinity of the ATP-hydrolyzing subunit KdpB by the formation of a transient KdpB/KdpC/ATP ternary complex. The protein is Potassium-transporting ATPase KdpC subunit of Bacillus cytotoxicus (strain DSM 22905 / CIP 110041 / 391-98 / NVH 391-98).